The following is a 236-amino-acid chain: UPF0502 protein Bcep1808_3727 (236 aa).

This sequence belongs to the UPF0502 family.

The chain is UPF0502 protein Bcep1808_3727 from Burkholderia vietnamiensis (strain G4 / LMG 22486) (Burkholderia cepacia (strain R1808)).